The sequence spans 444 residues: MFS-type transporter dbaD (444 aa).

Polar residues predominate over residues 1-13 (MTEQPPQNHSVDL). A disordered region spans residues 1–57 (MTEQPPQNHSVDLNQNEDNNENDYRSSSATDAERPCEPKIEESTAKPPTGPPAPPPP). An N-linked (GlcNAc...) asparagine glycan is attached at asparagine 8. Residues 31 to 44 (DAERPCEPKIEEST) are compositionally biased toward basic and acidic residues. Residues 48-57 (PTGPPAPPPP) are compositionally biased toward pro residues. 11 helical membrane passes run 62 to 82 (LVAW…WGIM), 107 to 127 (WIGS…GSIY), 134 to 154 (ALLV…SLCK), 159 to 179 (VLLA…VPCV), 192 to 212 (TALG…PIVL), 223 to 243 (WSVR…IAVM), 267 to 287 (MAFT…LFYI), 301 to 323 (MAFY…PNAM), 330 to 350 (FNLI…LLAV), 356 to 376 (LIVI…LPPL), and 394 to 414 (MGFG…GAIL). Asparagine 421 is a glycosylation site (N-linked (GlcNAc...) asparagine). The helical transmembrane segment at 424 to 444 (GLWVYGGVTSLVAGFIICIAV) threads the bilayer.

Belongs to the major facilitator superfamily. Monocarboxylate porter (TC 2.A.1.13) family.

The protein localises to the cell membrane. Functionally, MFS-type transporter; part of the gene cluster that mediates the biosynthesis of the antibiotic 2,4- dihydroxy-3-methyl-6-(2-oxopropyl)benzaldehyde (DHMBA) and its derivatives. Is probably involved in the transport of the metabolites to the environment. In Emericella nidulans (strain FGSC A4 / ATCC 38163 / CBS 112.46 / NRRL 194 / M139) (Aspergillus nidulans), this protein is MFS-type transporter dbaD.